Reading from the N-terminus, the 206-residue chain is Large ribosomal subunit protein uL4 (206 aa).

The disordered stretch occupies residues 65–85 (KQKGSGGARHGDRKAPQFRGG).

The protein belongs to the universal ribosomal protein uL4 family. In terms of assembly, part of the 50S ribosomal subunit.

One of the primary rRNA binding proteins, this protein initially binds near the 5'-end of the 23S rRNA. It is important during the early stages of 50S assembly. It makes multiple contacts with different domains of the 23S rRNA in the assembled 50S subunit and ribosome. In terms of biological role, forms part of the polypeptide exit tunnel. This chain is Large ribosomal subunit protein uL4, found in Parvibaculum lavamentivorans (strain DS-1 / DSM 13023 / NCIMB 13966).